We begin with the raw amino-acid sequence, 295 residues long: 4-hydroxy-tetrahydrodipicolinate synthase (295 aa).

Residue T46 participates in pyruvate binding. Y134 functions as the Proton donor/acceptor in the catalytic mechanism. K162 serves as the catalytic Schiff-base intermediate with substrate. A pyruvate-binding site is contributed by I205.

This sequence belongs to the DapA family. As to quaternary structure, homotetramer; dimer of dimers.

Its subcellular location is the cytoplasm. It carries out the reaction L-aspartate 4-semialdehyde + pyruvate = (2S,4S)-4-hydroxy-2,3,4,5-tetrahydrodipicolinate + H2O + H(+). Its pathway is amino-acid biosynthesis; L-lysine biosynthesis via DAP pathway; (S)-tetrahydrodipicolinate from L-aspartate: step 3/4. In terms of biological role, catalyzes the condensation of (S)-aspartate-beta-semialdehyde [(S)-ASA] and pyruvate to 4-hydroxy-tetrahydrodipicolinate (HTPA). This Anaeromyxobacter dehalogenans (strain 2CP-C) protein is 4-hydroxy-tetrahydrodipicolinate synthase.